The primary structure comprises 252 residues: Large ribosomal subunit protein uL29m (252 aa).

Lysine 146 is modified (N6-acetyllysine).

The protein belongs to the universal ribosomal protein uL29 family. As to quaternary structure, component of the mitochondrial ribosome large subunit (39S) which comprises a 16S rRNA and about 50 distinct proteins.

It localises to the mitochondrion. In Bos taurus (Bovine), this protein is Large ribosomal subunit protein uL29m (MRPL47).